We begin with the raw amino-acid sequence, 314 residues long: Torsin-2A (314 aa).

The first 19 residues, M1–G19, serve as a signal peptide directing secretion. G86–T93 provides a ligand contact to ATP. Residues N142 and N283 are each glycosylated (N-linked (GlcNAc...) asparagine).

This sequence belongs to the ClpA/ClpB family. Torsin subfamily. Homohexamer.

It localises to the endoplasmic reticulum lumen. The protein is Torsin-2A (tor2a) of Xenopus laevis (African clawed frog).